The following is a 254-amino-acid chain: Transcription factor bHLH51 (254 aa).

A bHLH domain is found at 62 to 111 (SLSRSHRLAEKRRRDRINSHLTALRKLVPNSDKLDKAALLATVIEQVKEL).

As to quaternary structure, homodimer. As to expression, expressed constitutively in roots, stems, and flowers.

The protein resides in the nucleus. The polypeptide is Transcription factor bHLH51 (BHLH51) (Arabidopsis thaliana (Mouse-ear cress)).